We begin with the raw amino-acid sequence, 158 residues long: 2-C-methyl-D-erythritol 2,4-cyclodiphosphate synthase (158 aa).

A divalent metal cation is bound by residues aspartate 9 and histidine 11. Residues 9 to 11 (DVH) and 35 to 36 (HS) contribute to the 4-CDP-2-C-methyl-D-erythritol 2-phosphate site. A divalent metal cation is bound at residue histidine 43. 4-CDP-2-C-methyl-D-erythritol 2-phosphate is bound by residues 57 to 59 (DIG), 62 to 66 (FPDTD), 101 to 107 (AQKPKMA), 133 to 136 (TTTE), phenylalanine 140, and arginine 143.

It belongs to the IspF family. Homotrimer. A divalent metal cation is required as a cofactor.

The catalysed reaction is 4-CDP-2-C-methyl-D-erythritol 2-phosphate = 2-C-methyl-D-erythritol 2,4-cyclic diphosphate + CMP. Its pathway is isoprenoid biosynthesis; isopentenyl diphosphate biosynthesis via DXP pathway; isopentenyl diphosphate from 1-deoxy-D-xylulose 5-phosphate: step 4/6. Functionally, involved in the biosynthesis of isopentenyl diphosphate (IPP) and dimethylallyl diphosphate (DMAPP), two major building blocks of isoprenoid compounds. Catalyzes the conversion of 4-diphosphocytidyl-2-C-methyl-D-erythritol 2-phosphate (CDP-ME2P) to 2-C-methyl-D-erythritol 2,4-cyclodiphosphate (ME-CPP) with a corresponding release of cytidine 5-monophosphate (CMP). This Bacillus licheniformis (strain ATCC 14580 / DSM 13 / JCM 2505 / CCUG 7422 / NBRC 12200 / NCIMB 9375 / NCTC 10341 / NRRL NRS-1264 / Gibson 46) protein is 2-C-methyl-D-erythritol 2,4-cyclodiphosphate synthase.